Consider the following 662-residue polypeptide: ATP-dependent RNA helicase DDX3X (662 aa).

An N-acetylserine modification is found at serine 2. The required for TBK1 and IKBKE-dependent IFNB1 activation stretch occupies residues 2–139 (SHVAVENALG…KSDEDDWSKP (138 aa)). The Nuclear export signal signature appears at 12-21 (LDQQFAGLDL). Residues 19–144 (LDLNSSDNQS…DWSKPLPPSE (126 aa)) are disordered. Positions 21-34 (LNSSDNQSGGSTAS) are enriched in polar residues. Residues 38-44 (YIPPHLR) are interaction with EIF4E. Residues 44-68 (RNREATKGFYDKDSSGWSSSKDKDA) show a composition bias toward basic and acidic residues. An N6-acetyllysine modification is found at lysine 55. Residues serine 82 and serine 90 each carry the phosphoserine modification. The span at 94–130 (GRFDDRGRGDYDGIGGRGDRSGFGKFERGGNSRWCDK) shows a compositional bias: basic and acidic residues. The tract at residues 100–110 (GRGDYDGIGGR) is interaction with IKBKE. Positions 100–662 (GRGDYDGIGG…NSQGVDWWGN (563 aa)) are interaction with GSK3B. Arginine 101 carries the omega-N-methylarginine modification. At tyrosine 104 the chain carries Phosphotyrosine. Arginine 110 is subject to Omega-N-methylarginine. N6-acetyllysine is present on lysine 118. Serine 131 is modified (phosphoserine). The interaction with CHUK stretch occupies residues 139-172 (PLPPSERLEQELFSGGNTGINFEKYDDIPVEATG). The Q motif motif lies at 180 to 208 (ESFSDVEMGEIIMGNIELTRYTRPTPVQK). The residue at position 183 (serine 183) is a Phosphoserine. 200-207 (YTRPTPVQ) is a binding site for ATP. The 193-residue stretch at 211–403 (IPIIKEKRDL…RDFLDEYIFL (193 aa)) folds into the Helicase ATP-binding domain. Lysine 215 is covalently cross-linked (Glycyl lysine isopeptide (Lys-Gly) (interchain with G-Cter in SUMO2)). 224-231 (AQTGSGKT) lines the ATP pocket. The segment at 250–259 (ALRAMKENGR) is involved in stimulation of ATPase activity by DNA and RNA, nucleic acid binding and unwinding. The DEAD box signature appears at 347–350 (DEAD). Residues 414–575 (NITQKVVWVE…EVPSWLENMA (162 aa)) form the Helicase C-terminal domain. Serine 456 is modified (phosphoserine). The interaction with NXF1 stretch occupies residues 536 to 661 (GNLGLATSFF…YNSQGVDWWG (126 aa)). Arginine 592 bears the Omega-N-methylarginine mark. 3 positions are modified to phosphoserine: serine 594, serine 605, and serine 612. The interval 601 to 633 (DYRQSSGASSSSFSSSRASSSRSGGGGHGGSRG) is disordered. Over residues 604-622 (QSSGASSSSFSSSRASSSR) the composition is skewed to low complexity. Arginine 617 and arginine 632 each carry omega-N-methylarginine. A compositionally biased stretch (gly residues) spans 623-633 (SGGGGHGGSRG).

This sequence belongs to the DEAD box helicase family. DDX3/DED1 subfamily. In terms of assembly, homodimer; can bind RNA as a monomer and as a dimer/oligomer. Interacts with TDRD3. When phosphorylated, interacts with IRF3; the interaction facilitates the phosphorylation and activation of IRF3 by IKBKE. Directly interacts with XPO1/CRM1. The interaction with XPO1/CMR1 is dependent on the DDX3X nuclear export signal motif and XPO1 interaction with GTPase RAN in its active GTP-bound form. Weakly interacts with TBKBP1/SINTBAD. Directly interacts with TRAF3; this interaction stimulates TRAF3 'Lys-63' ubiquitination. Interacts with CSNK1E in a Wnt-dependent manner; this interaction greatly enhances CSNK1E affinity for ATP, stimulates its kinase activity and promotes CSNK1E-mediated DVL2 phosphorylation. In the presence of RNA, the interaction is decreased. Also interacts with CSNK1D and stimulates its kinase activity. Interacts with TRPV4; this interaction is decreased when the TRPV4 channel is activated, leading to DDX3X relocalization to the nucleus. Interacts with MAP3K14/NIK. Directly interacts with CHUK/IKKA after physiological activation of the TLR7 and TLR8 pathways; this interaction enhances CHUK autophosphorylation. May associate with EIF4F complex, composed of at least EIF4A, EIF4E and EIF4G1/EIF4G3. Directly interacts with EIF4E in an RNA-independent manner; this interaction enhances EIF4E cap-binding ability. Directly interacts with EIF4G1 in an RNA-independent manner. DDX3X competes with EIF4G1 for interaction with EIF4E. Interacts with EIF4A1 and EIF2S1 in an RNA-independent manner. Associates with the eukaryotic translation initiation factor 3 (eIF-3) complex, including with EIF3B and EIF3C subunits. Directly interacts with IKBKE/IKKE; this interaction stimulates IKBKE activating autophosphorylation and is induced upon viral infection. Interacts with TBK1. Interacts with SP1; this interaction potentiates SP1-induced CDKN1A/WAF1/CIP1 transcription. Interacts with GSK3A and GSK3B. Interacts with several death receptors, inclusing FAS, TNFRSF10A and TNFRSF10B. Recruited to TNFRSF10B in the absence of receptor stimulation. When TNFRSF10B is stimulated, further recruited to the receptor and cleaved by caspases. A large proteolytic fragment remains associated with TNFRSF10B. Interacts (via C-terminus) with NXF1/TAP; this interaction may be partly involved in DDX3X nuclear export and in NXF1 localization to stress granules. Identified in an mRNP complex, composed of at least DHX9, DDX3X, ELAVL1, HNRNPU, IGF2BP1/2, ILF3, PABPC1, PCBP2, PTBP2, STAU1, STAU2, SYNCRIP and YBX1. The interaction with IGF2BP1/2 is RNA-dependent. Directly interacts with PABPC1/PABP1 in an RNA-independent manner. This interaction increases in stressed cells and decreases during cell recovery. Interacts (via C-terminus) with MAVS/IPS-1; this interaction potentiates MAVS-mediated IFNB induction. Interacts with ERCC6/CBS. Interacts with DHX33 in an RNA-independent manner. Interacts with DDX5 in the cytoplasm; this interaction may be more efficient when both proteins are unphosphorylated. Interacts with RIGI. Interacts with IFIH1/MDA5. Interacts with NCAPH; this interaction may be important for the NCAPH localization at condensing chromosomes during mitosis. Interacts with NLRP3 (via NACHT domain) under inflammasome-activating conditions. Interacts with CAPRIN1. Interacts with HNF4A and NR0B2/SHP in an RNA-independent manner; this interaction disrupts the interaction between HNF4 and NR0B2 that forms inactive heterodimers and enhances the formation of active HNF4 homodimers. Interacts with CREBBP/CBP. Interacts with EP300/p300. Interacts with gamma-tubulin. Interacts with phosphorylated TP53. Directly interacts with RELA/p65; this interaction may trap RELA in the cytoplasm, impairing nuclear relocalization upon TNF activating signals. Phosphorylated by TBK1; the phosphorylation is required for the synergistic induction of IFNB mediated by TBK1 and DDX3X. Phosphorylated by IKBKE. Also phosphorylated by CSNK1E; this phosphorylation may inhibit RNA-stimulated ATPase activity. Post-translationally, upon stimulation of death receptors, including TNFRSF10B, recruited to receptors and cleaved by caspases. Proteolytic fragments remain associated with the receptors. This cleavage presumably inactivates DDX3X anti-apoptotic function. In terms of processing, ubiquitinated by RNF39 via 'Lys-48'-linked ubiquitination; leading to proteasomal degradation. As to expression, expressed in ovary, including in germinal vesicle immature and metaphase II (MII) stage oocytes (at protein level). In the brain, expressed in the granule cells of the cerebellum and dentate gyrus, the pyramidal cells of the hippocampus, the ependymal cells lining the ventricles, choroid plexi and olfactory bulb. Also accumulates in the thalamic nuclei, the dorsal region of the colliculi and the pontine nucleus.

The protein resides in the cell membrane. It is found in the nucleus. Its subcellular location is the cytoplasm. The protein localises to the stress granule. It localises to the inflammasome. The protein resides in the cell projection. It is found in the lamellipodium. It catalyses the reaction ATP + H2O = ADP + phosphate + H(+). Its function is as follows. Multifunctional ATP-dependent RNA helicase. The ATPase activity can be stimulated by various ribo-and deoxynucleic acids indicative for a relaxed substrate specificity. In vitro can unwind partially double-stranded DNA with a preference for 5'-single-stranded DNA overhangs. Binds RNA G-quadruplex (rG4s) structures, including those located in the 5'-UTR of NRAS mRNA. Involved in many cellular processes, which do not necessarily require its ATPase/helicase catalytic activities. Involved in transcription regulation. Positively regulates CDKN1A/WAF1/CIP1 transcription in an SP1-dependent manner, hence inhibits cell growth. This function requires its ATPase, but not helicase activity. CDKN1A up-regulation may be cell-type specific. Binds CDH1/E-cadherin promoter and represses its transcription. Potentiates HNF4A-mediated MTTP transcriptional activation; this function requires ATPase, but not helicase activity. Facilitates HNF4A acetylation, possibly catalyzed by CREBBP/EP300, thereby increasing the DNA-binding affinity of HNF4 to its response element. In addition, disrupts the interaction between HNF4 and SHP that forms inactive heterodimers and enhances the formation of active HNF4 homodimers. By promoting HNF4A-induced MTTP expression, may play a role in lipid homeostasis. May positively regulate TP53 transcription. Associates with mRNPs, predominantly with spliced mRNAs carrying an exon junction complex (EJC). Involved in the regulation of translation initiation. Not involved in the general process of translation, but promotes efficient translation of selected complex mRNAs, containing highly structured 5'-untranslated regions (UTR). This function depends on helicase activity. Might facilitate translation by resolving secondary structures of 5'-UTRs during ribosome scanning. Alternatively, may act prior to 43S ribosomal scanning and promote 43S pre-initiation complex entry to mRNAs exhibiting specific RNA motifs, by performing local remodeling of transcript structures located close to the cap moiety. Independently of its ATPase activity, promotes the assembly of functional 80S ribosomes and disassembles from ribosomes prior to the translation elongation process. Positively regulates the translation of cyclin E1/CCNE1 mRNA and consequently promotes G1/S-phase transition during the cell cycle. May activate TP53 translation. Required for endoplasmic reticulum stress-induced ATF4 mRNA translation. Independently of its ATPase/helicase activity, enhances IRES-mediated translation; this activity requires interaction with EIF4E. Independently of its ATPase/helicase activity, has also been shown specifically repress cap-dependent translation, possibly by acting on translation initiation factor EIF4E. Involved in innate immunity, acting as a viral RNA sensor. Binds viral RNAs and promotes the production of type I interferon (IFN-alpha and IFN-beta). Potentiate MAVS/RIGI-mediated induction of IFNB in early stages of infection. Enhances IFNB1 expression via IRF3/IRF7 pathway and participates in NFKB activation in the presence of MAVS and TBK1. Involved in TBK1 and IKBKE-dependent IRF3 activation leading to IFNB induction, acts as a scaffolding adapter that links IKBKE and IRF3 and coordinates their activation. Involved in the TLR7/TLR8 signaling pathway leading to type I interferon induction, including IFNA4 production. In this context, acts as an upstream regulator of IRF7 activation by MAP3K14/NIK and CHUK/IKKA. Stimulates CHUK autophosphorylation and activation following physiological activation of the TLR7 and TLR8 pathways, leading to MAP3K14/CHUK-mediated activatory phosphorylation of IRF7. Also stimulates MAP3K14/CHUK-dependent NF-kappa-B signaling. Negatively regulates TNF-induced IL6 and IL8 expression, via the NF-kappa-B pathway. May act by interacting with RELA/p65 and trapping it in the cytoplasm. May also bind IFNB promoter; the function is independent of IRF3. Involved in both stress and inflammatory responses. Independently of its ATPase/helicase activity, required for efficient stress granule assembly through its interaction with EIF4E, hence promotes survival in stressed cells. Independently of its helicase activity, regulates NLRP3 inflammasome assembly through interaction with NLRP3 and hence promotes cell death by pyroptosis during inflammation. This function is independent of helicase activity. Therefore DDX3X availability may be used to interpret stress signals and choose between pro-survival stress granules and pyroptotic NLRP3 inflammasomes and serve as a live-or-die checkpoint in stressed cells. In association with GSK3A/B, negatively regulates extrinsic apoptotic signaling pathway via death domain receptors, including TNFRSF10B, slowing down the rate of CASP3 activation following death receptor stimulation. Cleavage by caspases may inactivate DDX3X and relieve the inhibition. Independently of its ATPase/helicase activity, allosteric activator of CSNK1E. Stimulates CSNK1E-mediated phosphorylation of DVL2, thereby involved in the positive regulation of Wnt/beta-catenin signaling pathway. Also activates CSNK1A1 and CSNK1D in vitro, but it is uncertain if these targets are physiologically relevant. ATPase and casein kinase-activating functions are mutually exclusive. May be involved in mitotic chromosome segregation. The polypeptide is ATP-dependent RNA helicase DDX3X (Ddx3x) (Mus musculus (Mouse)).